The primary structure comprises 61 residues: Large ribosomal subunit protein bL32 (61 aa).

A compositionally biased stretch (basic residues) spans 1-16 (MAVPKRKTSPSKRGMR). A disordered region spans residues 1-61 (MAVPKRKTSP…RSVLTPKNSG (61 aa)). Residues 28-44 (VEDKDSGELRRPHHIDL) are compositionally biased toward basic and acidic residues.

The protein belongs to the bacterial ribosomal protein bL32 family.

The polypeptide is Large ribosomal subunit protein bL32 (Bartonella bacilliformis (strain ATCC 35685 / KC583 / Herrer 020/F12,63)).